The chain runs to 345 residues: GTPase Obg (345 aa).

The Obg domain occupies M1 to L159. The interval G121–G142 is disordered. The OBG-type G domain occupies A160–G327. Residues G166 to S173, F191 to R195, D212 to G215, N279 to D282, and S308 to A310 each bind GTP. Residues S173 and T193 each coordinate Mg(2+).

The protein belongs to the TRAFAC class OBG-HflX-like GTPase superfamily. OBG GTPase family. In terms of assembly, monomer. Mg(2+) serves as cofactor.

The protein resides in the cytoplasm. An essential GTPase which binds GTP, GDP and possibly (p)ppGpp with moderate affinity, with high nucleotide exchange rates and a fairly low GTP hydrolysis rate. Plays a role in control of the cell cycle, stress response, ribosome biogenesis and in those bacteria that undergo differentiation, in morphogenesis control. The chain is GTPase Obg from Rhizorhabdus wittichii (strain DSM 6014 / CCUG 31198 / JCM 15750 / NBRC 105917 / EY 4224 / RW1) (Sphingomonas wittichii).